The primary structure comprises 120 residues: Phosphoribosyl-AMP cyclohydrolase (120 aa).

A Mg(2+)-binding site is contributed by D75. A Zn(2+)-binding site is contributed by C76. 2 residues coordinate Mg(2+): D77 and D79. Zn(2+) contacts are provided by C92 and C99.

It belongs to the PRA-CH family. In terms of assembly, homodimer. The cofactor is Mg(2+). Zn(2+) is required as a cofactor.

Its subcellular location is the cytoplasm. The catalysed reaction is 1-(5-phospho-beta-D-ribosyl)-5'-AMP + H2O = 1-(5-phospho-beta-D-ribosyl)-5-[(5-phospho-beta-D-ribosylamino)methylideneamino]imidazole-4-carboxamide. It participates in amino-acid biosynthesis; L-histidine biosynthesis; L-histidine from 5-phospho-alpha-D-ribose 1-diphosphate: step 3/9. Catalyzes the hydrolysis of the adenine ring of phosphoribosyl-AMP. The sequence is that of Phosphoribosyl-AMP cyclohydrolase from Methanosarcina mazei (strain ATCC BAA-159 / DSM 3647 / Goe1 / Go1 / JCM 11833 / OCM 88) (Methanosarcina frisia).